The chain runs to 311 residues: Serine/threonine-protein phosphatase 4 catalytic subunit A (311 aa).

4 residues coordinate Mn(2+): Asp58, His60, Asp86, and Asn118. The active-site Proton donor is the His119. The Mn(2+) site is built by His168 and His242. Leu311 bears the Leucine methyl ester mark.

Belongs to the PPP phosphatase family. PP-4 (PP-X) subfamily. In terms of assembly, serine/threonine-protein phosphatase 4 (PP4) occurs in different assemblies of the catalytic and one or more regulatory subunits. Mn(2+) serves as cofactor.

It localises to the cytoplasm. The protein localises to the cytoskeleton. Its subcellular location is the microtubule organizing center. The protein resides in the centrosome. It carries out the reaction O-phospho-L-seryl-[protein] + H2O = L-seryl-[protein] + phosphate. It catalyses the reaction O-phospho-L-threonyl-[protein] + H2O = L-threonyl-[protein] + phosphate. Functionally, protein phosphatase that regulates many processes such as microtubule organization at centrosomes. This is Serine/threonine-protein phosphatase 4 catalytic subunit A (ppp4ca) from Danio rerio (Zebrafish).